Here is a 142-residue protein sequence, read N- to C-terminus: Large ribosomal subunit protein uL16 (142 aa).

This sequence belongs to the universal ribosomal protein uL16 family. In terms of assembly, part of the 50S ribosomal subunit.

In terms of biological role, binds 23S rRNA and is also seen to make contacts with the A and possibly P site tRNAs. This is Large ribosomal subunit protein uL16 from Fervidobacterium nodosum (strain ATCC 35602 / DSM 5306 / Rt17-B1).